Reading from the N-terminus, the 625-residue chain is Probable potassium transport system protein Kup (625 aa).

Transmembrane regions (helical) follow at residues 13 to 33 (TALA…LYAL), 53 to 73 (ILSI…VAIV), 103 to 123 (IYMI…GIIT), 141 to 161 (VFDP…FLVQ), 172 to 192 (FGPI…HSVI), 206 to 226 (AIQF…AVVL), 250 to 270 (WFFV…ALLL), 282 to 302 (LLVP…ATVI), 340 to 360 (IYVP…ILIF), 369 to 389 (AYGL…AVFI), 400 to 420 (VLLL…ATSL), and 422 to 442 (ILSG…ILMT).

This sequence belongs to the HAK/KUP transporter (TC 2.A.72) family.

Its subcellular location is the cell inner membrane. It carries out the reaction K(+)(in) + H(+)(in) = K(+)(out) + H(+)(out). Transport of potassium into the cell. Likely operates as a K(+):H(+) symporter. The sequence is that of Probable potassium transport system protein Kup from Acinetobacter baumannii (strain AYE).